A 410-amino-acid chain; its full sequence is 3-phosphoshikimate 1-carboxyvinyltransferase (410 aa).

3-phosphoshikimate-binding residues include lysine 20, serine 21, and arginine 25. Position 20 (lysine 20) interacts with phosphoenolpyruvate. Residues glycine 87 and arginine 115 each coordinate phosphoenolpyruvate. Residues serine 157, serine 158, glutamine 159, serine 183, aspartate 293, and lysine 320 each coordinate 3-phosphoshikimate. Position 159 (glutamine 159) interacts with phosphoenolpyruvate. Aspartate 293 serves as the catalytic Proton acceptor. Residues arginine 324, arginine 365, and lysine 391 each contribute to the phosphoenolpyruvate site.

It belongs to the EPSP synthase family. In terms of assembly, monomer.

Its subcellular location is the cytoplasm. The enzyme catalyses 3-phosphoshikimate + phosphoenolpyruvate = 5-O-(1-carboxyvinyl)-3-phosphoshikimate + phosphate. It functions in the pathway metabolic intermediate biosynthesis; chorismate biosynthesis. In terms of biological role, catalyzes the transfer of the enolpyruvyl moiety of phosphoenolpyruvate (PEP) to the 5-hydroxyl of shikimate-3-phosphate (S3P) to produce enolpyruvyl shikimate-3-phosphate and inorganic phosphate. The chain is 3-phosphoshikimate 1-carboxyvinyltransferase from Thermoplasma volcanium (strain ATCC 51530 / DSM 4299 / JCM 9571 / NBRC 15438 / GSS1).